The primary structure comprises 196 residues: Large ribosomal subunit protein uL5 (196 aa).

The protein belongs to the universal ribosomal protein uL5 family. As to quaternary structure, part of the 50S ribosomal subunit; part of the 5S rRNA/L5/L18/L25 subcomplex. Contacts the 5S rRNA and the P site tRNA. Forms a bridge to the 30S subunit in the 70S ribosome.

Functionally, this is one of the proteins that bind and probably mediate the attachment of the 5S RNA into the large ribosomal subunit, where it forms part of the central protuberance. In the 70S ribosome it contacts protein S13 of the 30S subunit (bridge B1b), connecting the 2 subunits; this bridge is implicated in subunit movement. Contacts the P site tRNA; the 5S rRNA and some of its associated proteins might help stabilize positioning of ribosome-bound tRNAs. The polypeptide is Large ribosomal subunit protein uL5 (Prosthecochloris aestuarii (strain DSM 271 / SK 413)).